Consider the following 156-residue polypeptide: Succinate dehydrogenase assembly factor 2-A, mitochondrial (156 aa).

A mitochondrion-targeting transit peptide spans 1 to 24 (MLRQFLVSTAVRRVVVPSMAQTRC). Positions 35–62 (TPGEIVDYDDPPHIPVPEYPSRPDEPLE) are disordered.

The protein belongs to the SDHAF2 family. Interacts with the flavoprotein subunit within the SDH catalytic dimer.

The protein localises to the mitochondrion matrix. Plays an essential role in the assembly of succinate dehydrogenase (SDH), an enzyme complex (also referred to as respiratory complex II) that is a component of both the tricarboxylic acid (TCA) cycle and the mitochondrial electron transport chain, and which couples the oxidation of succinate to fumarate with the reduction of ubiquinone (coenzyme Q) to ubiquinol. Required for flavinylation (covalent attachment of FAD) of the flavoprotein subunit of the SDH catalytic dimer. The protein is Succinate dehydrogenase assembly factor 2-A, mitochondrial of Drosophila ananassae (Fruit fly).